Consider the following 122-residue polypeptide: MIQTETRLKVADNSGAREILTIKVLGGSGRKFANIGDVIVASVKQATPGGAVKKGDVVKAVIVRTKSGARRKDGSYIKFDENAAVIIREDKTPRGTRIFGPVARELRDGGFMKIVSLAPEVL.

It belongs to the universal ribosomal protein uL14 family. As to quaternary structure, part of the 50S ribosomal subunit. Forms a cluster with proteins L3 and L19. In the 70S ribosome, L14 and L19 interact and together make contacts with the 16S rRNA in bridges B5 and B8.

In terms of biological role, binds to 23S rRNA. Forms part of two intersubunit bridges in the 70S ribosome. This chain is Large ribosomal subunit protein uL14, found in Streptococcus gordonii (strain Challis / ATCC 35105 / BCRC 15272 / CH1 / DL1 / V288).